Reading from the N-terminus, the 243-residue chain is Toxin CcTX-1 (243 aa).

Positions 1 to 25 (SSPEKKNDMSKPGRMRFDNKKEPRS) are enriched in basic and acidic residues. Residues 1 to 48 (SSPEKKNDMSKPGRMRFDNKKEPRSSAKNSGNGYGCVDVNAGREPLTG) are disordered.

Contains disulfide bonds. In terms of tissue distribution, nematocytes.

Its subcellular location is the secreted. The protein resides in the nematocyst. The protein localises to the target cell membrane. In terms of biological role, has potent hemolytic activity. Is lethal to crayfish. Causes cutaneous inflammation in humans. May act as a pore-forming toxin, disrupting normal transmembrane ion concentration gradients in susceptible cells. This is Toxin CcTX-1 from Cyanea capillata (Lion's mane jellyfish).